Reading from the N-terminus, the 234-residue chain is Uridylate kinase (234 aa).

Gly10–Ser11 provides a ligand contact to ATP. A UMP-binding site is contributed by Gly44. Positions 45 and 49 each coordinate ATP. UMP contacts are provided by residues Asp66 and Ile114–Thr120. 3 residues coordinate ATP: Thr140, Tyr146, and Asp149.

It belongs to the UMP kinase family. As to quaternary structure, homohexamer.

The protein resides in the cytoplasm. The enzyme catalyses UMP + ATP = UDP + ADP. It participates in pyrimidine metabolism; CTP biosynthesis via de novo pathway; UDP from UMP (UMPK route): step 1/1. With respect to regulation, inhibited by UTP. Functionally, catalyzes the reversible phosphorylation of UMP to UDP. This Methanoculleus marisnigri (strain ATCC 35101 / DSM 1498 / JR1) protein is Uridylate kinase.